The following is a 183-amino-acid chain: Helofensin-1 (183 aa).

The first 26 residues, 1–26 (MQMDWLFIAVVSAIGLLSSGVPGTQG), serve as a signal peptide directing secretion. The stretch at 27–64 (AYTTEQCRALNGTCRFYACFPKNVVIGKCDWLGWGCCA) is one C(6)C(4)C(9)C(6)CC 1; approximate repeat. One copy of the C(6)C(4)C(9)C(6)CC 2; approximate repeat lies at 65 to 101 (RTPLERCTAKKGTCTASGCTETDTDHGPCDGGAQCCQ). Residues 102–139 (RDPVKYCKFHGNVCGRGKCPMDHIPIGEQCMPGYPCCK) form a C(6)C(4)C(9)C(6)CC 3; approximate repeat. A C(6)C(4)C(9)C(6)CC 4; approximate repeat occupies 140-177 (RDGPAYCKSKGGKCLRRCSQIVPTDIIGVCADGVPCCK).

The protein belongs to the beta-defensin family. Helofensin subfamily. Expressed by the mandibular venom gland.

It localises to the secreted. In terms of biological role, lethal toxin which possesses an inhibitory effect on direct electrical stimulation of the isolated hemi-diaphragm of mice. Neither hemorrhagic nor hemolytic activities are detected. Phospholipase A2 activity, proteolytic activity and arginine esterolytic activity are absent. The chain is Helofensin-1 from Heloderma suspectum cinctum (Banded Gila monster).